Here is a 561-residue protein sequence, read N- to C-terminus: Transmembrane protein 151B (561 aa).

Residues 1–10 (MSPPGSAAGE) show a composition bias toward low complexity. The segment at 1 to 42 (MSPPGSAAGESAGGGGGGGGSGVPEEPMASADEGPAREEQRP) is disordered. Positions 11-22 (SAGGGGGGGGSG) are enriched in gly residues. The next 2 membrane-spanning stretches (helical) occupy residues 59–79 (CLLLSLLMYGCLGAVAWCHVT) and 106–126 (YVYIPLAFLLMLYAVYLVECW). Residues 489-507 (VNEASCPTEQTRLSSQASM) are compositionally biased toward polar residues. Residues 489–523 (VNEASCPTEQTRLSSQASMRDNEEDEDEEEAGPPP) are disordered. The span at 510 to 519 (NEEDEDEEEA) shows a compositional bias: acidic residues.

Belongs to the TMEM151 family.

It is found in the membrane. The protein is Transmembrane protein 151B (Tmem151b) of Mus musculus (Mouse).